Consider the following 323-residue polypeptide: Beta-ketoacyl-[acyl-carrier-protein] synthase III (323 aa).

Active-site residues include C114 and H250. Residues 251–255 (QANIR) form an ACP-binding region. N280 is a catalytic residue.

The protein belongs to the thiolase-like superfamily. FabH family. As to quaternary structure, homodimer.

It is found in the cytoplasm. The catalysed reaction is malonyl-[ACP] + acetyl-CoA + H(+) = 3-oxobutanoyl-[ACP] + CO2 + CoA. It functions in the pathway lipid metabolism; fatty acid biosynthesis. Functionally, catalyzes the condensation reaction of fatty acid synthesis by the addition to an acyl acceptor of two carbons from malonyl-ACP. Catalyzes the first condensation reaction which initiates fatty acid synthesis and may therefore play a role in governing the total rate of fatty acid production. Possesses both acetoacetyl-ACP synthase and acetyl transacylase activities. Its substrate specificity determines the biosynthesis of branched-chain and/or straight-chain of fatty acids. The polypeptide is Beta-ketoacyl-[acyl-carrier-protein] synthase III (Ruegeria sp. (strain TM1040) (Silicibacter sp.)).